We begin with the raw amino-acid sequence, 452 residues long: Phosphoglucosamine mutase (452 aa).

Ser108 acts as the Phosphoserine intermediate in catalysis. Residues Ser108, Asp247, Asp249, and Asp251 each coordinate Mg(2+). Ser108 is modified (phosphoserine).

It belongs to the phosphohexose mutase family. The cofactor is Mg(2+). In terms of processing, activated by phosphorylation.

It carries out the reaction alpha-D-glucosamine 1-phosphate = D-glucosamine 6-phosphate. In terms of biological role, catalyzes the conversion of glucosamine-6-phosphate to glucosamine-1-phosphate. This chain is Phosphoglucosamine mutase, found in Paraburkholderia xenovorans (strain LB400).